The sequence spans 270 residues: MFTILLSLAILVFVPFLYKANRNTKDVKVNTISIDQKDGLPARKKLNILHLSDLHLENISVSPEELYHLTKDQPVDIIALTGDFLDRKRNIPKLAGYLNALQKLKPAYGMYAVFGNHDYVLKEEDFQRLKRVLEENGCITLQNEHVRIETAAGPVNIIGIDDYSTNRSNITGSYQSLENGYHLVLTHDPNIILDMKDVHYDYLLSGHFHGGQIHWPKPYHLVKMGKLVRMNMIKGLHYHHDKPFYISEGLGQTGVNIRVGSRPEVTFHQI.

D53, H55, D83, N116, H207, and H209 together coordinate a divalent metal cation.

The protein belongs to the metallophosphoesterase superfamily. The cofactor is a divalent metal cation.

This is an uncharacterized protein from Bacillus subtilis (strain 168).